A 304-amino-acid chain; its full sequence is Tyrosine recombinase XerD (304 aa).

One can recognise a Core-binding (CB) domain in the interval 6–91; sequence EPWRKTLETF…AIRSFHKFLL (86 aa). A Tyr recombinase domain is found at 112 to 298; it reads YLPSVLTIEE…DRSFIKEVHK (187 aa). Catalysis depends on residues Arg-155, Lys-179, His-250, Arg-253, and His-276. Tyr-285 functions as the O-(3'-phospho-DNA)-tyrosine intermediate in the catalytic mechanism.

This sequence belongs to the 'phage' integrase family. XerD subfamily. Forms a cyclic heterotetrameric complex composed of two molecules of XerC and two molecules of XerD.

It is found in the cytoplasm. Its function is as follows. Site-specific tyrosine recombinase, which acts by catalyzing the cutting and rejoining of the recombining DNA molecules. The XerC-XerD complex is essential to convert dimers of the bacterial chromosome into monomers to permit their segregation at cell division. It also contributes to the segregational stability of plasmids. The sequence is that of Tyrosine recombinase XerD from Chlorobaculum tepidum (strain ATCC 49652 / DSM 12025 / NBRC 103806 / TLS) (Chlorobium tepidum).